A 122-amino-acid polypeptide reads, in one-letter code: Protein NIM1-INTERACTING 2 (122 aa).

The span at M1–R22 shows a compositional bias: basic and acidic residues. A disordered region spans residues M1–E28. The involved in NPR1/NIM1 interaction stretch occupies residues D39–L45. Positions K70–R74 match the Nuclear localization signal motif.

In terms of assembly, interacts with NPR1 N-terminal region.

The protein resides in the nucleus. This chain is Protein NIM1-INTERACTING 2, found in Arabidopsis thaliana (Mouse-ear cress).